Reading from the N-terminus, the 534-residue chain is uncharacterized protein (534 aa).

2 helical membrane-spanning segments follow: residues 149-169 (ILTTLVTVGTTLGTPIFSITI) and 185-205 (VFLVIFSVFAIALGLVSSLIF).

It localises to the cell membrane. This is an uncharacterized protein from Mycoplasma pneumoniae (strain ATCC 29342 / M129 / Subtype 1) (Mycoplasmoides pneumoniae).